A 208-amino-acid polypeptide reads, in one-letter code: Guanylate kinase (208 aa).

Residues Gly-5 to Glu-184 form the Guanylate kinase-like domain. Gly-12 to Gly-19 is an ATP binding site.

Belongs to the guanylate kinase family.

It localises to the cytoplasm. It catalyses the reaction GMP + ATP = GDP + ADP. In terms of biological role, essential for recycling GMP and indirectly, cGMP. This is Guanylate kinase from Streptococcus pneumoniae (strain ATCC BAA-255 / R6).